We begin with the raw amino-acid sequence, 545 residues long: Membrane protein insertase YidC (545 aa).

The chain crosses the membrane as a helical span at residues 6–26 (NILLIGLLFVSFLLWQQWQAD). Residues 44 to 65 (STVADAHSSDVPDADSAVPEAT) form a disordered region. 4 helical membrane passes run 346–366 (LLMF…LITL), 424–444 (GGCL…WVLL), 461–481 (LSVQ…MFVM), and 504–524 (VIFT…WLVG).

Belongs to the OXA1/ALB3/YidC family. Type 1 subfamily. Interacts with the Sec translocase complex via SecD. Specifically interacts with transmembrane segments of nascent integral membrane proteins during membrane integration.

Its subcellular location is the cell inner membrane. In terms of biological role, required for the insertion and/or proper folding and/or complex formation of integral membrane proteins into the membrane. Involved in integration of membrane proteins that insert both dependently and independently of the Sec translocase complex, as well as at least some lipoproteins. Aids folding of multispanning membrane proteins. The polypeptide is Membrane protein insertase YidC (Shewanella pealeana (strain ATCC 700345 / ANG-SQ1)).